A 346-amino-acid polypeptide reads, in one-letter code: Uroporphyrinogen decarboxylase (346 aa).

Substrate-binding positions include 26 to 30 (RQAGR), aspartate 76, tyrosine 153, serine 208, and histidine 323.

It belongs to the uroporphyrinogen decarboxylase family. In terms of assembly, homodimer.

Its subcellular location is the cytoplasm. It carries out the reaction uroporphyrinogen III + 4 H(+) = coproporphyrinogen III + 4 CO2. The protein operates within porphyrin-containing compound metabolism; protoporphyrin-IX biosynthesis; coproporphyrinogen-III from 5-aminolevulinate: step 4/4. Its function is as follows. Catalyzes the decarboxylation of four acetate groups of uroporphyrinogen-III to yield coproporphyrinogen-III. This Prochlorococcus marinus (strain MIT 9215) protein is Uroporphyrinogen decarboxylase.